The primary structure comprises 245 residues: Phycocyanobilin:ferredoxin oxidoreductase (245 aa).

It belongs to the HY2 family.

It catalyses the reaction (2R,3Z)-phycocyanobilin + 4 oxidized [2Fe-2S]-[ferredoxin] = biliverdin IXalpha + 4 reduced [2Fe-2S]-[ferredoxin] + 4 H(+). In terms of biological role, catalyzes the four-electron reduction of biliverdin IX-alpha (2-electron reduction at both the A and D rings); the reaction proceeds via an isolatable 2-electron intermediate, 181,182-dihydrobiliverdin. The sequence is that of Phycocyanobilin:ferredoxin oxidoreductase from Microcystis aeruginosa (strain NIES-843 / IAM M-2473).